The following is a 67-amino-acid chain: Large ribosomal subunit protein uL29 (67 aa).

Belongs to the universal ribosomal protein uL29 family.

The chain is Large ribosomal subunit protein uL29 from Ruminiclostridium cellulolyticum (strain ATCC 35319 / DSM 5812 / JCM 6584 / H10) (Clostridium cellulolyticum).